A 127-amino-acid polypeptide reads, in one-letter code: UPF0212 protein VNG_1264C (127 aa).

It belongs to the UPF0212 family.

The chain is UPF0212 protein VNG_1264C from Halobacterium salinarum (strain ATCC 700922 / JCM 11081 / NRC-1) (Halobacterium halobium).